The primary structure comprises 690 residues: Elongation factor G (690 aa).

The region spanning 8–283 (EKYRNIGIMA…AVVDYLPSPL (276 aa)) is the tr-type G domain. GTP-binding positions include 17–24 (AHIDAGKT), 81–85 (DTPGH), and 135–138 (NKLD).

The protein belongs to the TRAFAC class translation factor GTPase superfamily. Classic translation factor GTPase family. EF-G/EF-2 subfamily.

The protein localises to the cytoplasm. Functionally, catalyzes the GTP-dependent ribosomal translocation step during translation elongation. During this step, the ribosome changes from the pre-translocational (PRE) to the post-translocational (POST) state as the newly formed A-site-bound peptidyl-tRNA and P-site-bound deacylated tRNA move to the P and E sites, respectively. Catalyzes the coordinated movement of the two tRNA molecules, the mRNA and conformational changes in the ribosome. This is Elongation factor G from Rhizorhabdus wittichii (strain DSM 6014 / CCUG 31198 / JCM 15750 / NBRC 105917 / EY 4224 / RW1) (Sphingomonas wittichii).